The chain runs to 65 residues: Large ribosomal subunit protein bL35 (65 aa).

It belongs to the bacterial ribosomal protein bL35 family.

This is Large ribosomal subunit protein bL35 from Chlorobium phaeovibrioides (strain DSM 265 / 1930) (Prosthecochloris vibrioformis (strain DSM 265)).